Reading from the N-terminus, the 150-residue chain is Ribonuclease HI (150 aa).

Positions Met1–Met141 constitute an RNase H type-1 domain. 4 residues coordinate Mg(2+): Asp9, Glu47, Asp69, and Asp133.

This sequence belongs to the RNase H family. In terms of assembly, monomer. Mg(2+) serves as cofactor.

The protein resides in the cytoplasm. It carries out the reaction Endonucleolytic cleavage to 5'-phosphomonoester.. Functionally, endonuclease that specifically degrades the RNA of RNA-DNA hybrids. In Xylella fastidiosa (strain Temecula1 / ATCC 700964), this protein is Ribonuclease HI.